Here is a 314-residue protein sequence, read N- to C-terminus: Putative S-adenosyl-L-methionine-dependent methyltransferase MAV_0301 (314 aa).

S-adenosyl-L-methionine contacts are provided by residues Asp132 and 161–162; that span reads DL.

The protein belongs to the UPF0677 family.

Its function is as follows. Exhibits S-adenosyl-L-methionine-dependent methyltransferase activity. This Mycobacterium avium (strain 104) protein is Putative S-adenosyl-L-methionine-dependent methyltransferase MAV_0301.